Consider the following 989-residue polypeptide: ATP-dependent 6-phosphofructokinase subunit alpha (989 aa).

Residues 1 to 585 form an N-terminal catalytic PFK domain 1 region; it reads MPEPSISALS…SYESFLSVSK (585 aa). Residues Gly-220, 283–284, and 313–316 each bind ATP; these read RS and GDGS. Asp-314 lines the Mg(2+) pocket. Residues 359–361, Arg-396, 403–405, Glu-460, Arg-487, and 493–496 contribute to the beta-D-fructose 6-phosphate site; these read SID, MGR, and HVQR. Residue Asp-361 is the Proton acceptor of the active site. An interdomain linker region spans residues 586-599; the sequence is YDDGSYLVPESSRL. Positions 600-989 are C-terminal regulatory PFK domain 2; it reads NIAIIHVGAP…LSGRLSIRTT (390 aa). Residues Arg-670, 727–731, Arg-765, 772–774, Glu-832, Arg-858, 864–867, and Arg-963 each bind beta-D-fructose 2,6-bisphosphate; these read TVSNN, QGG, and HVQQ.

It belongs to the phosphofructokinase type A (PFKA) family. ATP-dependent PFK group I subfamily. Eukaryotic two domain clade 'E' sub-subfamily. Heterododecamer of 4 alpha, 4 beta and 4 gamma chains. The gamma chain bridges the N-terminal halves of the alpha and beta subunits. The cofactor is Mg(2+).

Its subcellular location is the cytoplasm. It carries out the reaction beta-D-fructose 6-phosphate + ATP = beta-D-fructose 1,6-bisphosphate + ADP + H(+). It participates in carbohydrate degradation; glycolysis; D-glyceraldehyde 3-phosphate and glycerone phosphate from D-glucose: step 3/4. With respect to regulation, allosterically activated by ADP, AMP, or fructose 2,6-bisphosphate, and allosterically inhibited by ATP or citrate. Catalyzes the phosphorylation of D-fructose 6-phosphate to fructose 1,6-bisphosphate by ATP, the first committing step of glycolysis. Involved in the modulation of glucose-induced microautophagy of peroxisomes independent of its ability to metabolize glucose intermediates. This is ATP-dependent 6-phosphofructokinase subunit alpha (PFK1) from Komagataella phaffii (strain GS115 / ATCC 20864) (Yeast).